Reading from the N-terminus, the 262-residue chain is Tropinone reductase homolog At2g30670 (262 aa).

Residue 13–37 (LVTGGASGIGHAIVEELAGLGARIY) coordinates NADP(+). Serine 146 provides a ligand contact to substrate. Tyrosine 159 acts as the Proton acceptor in catalysis.

This sequence belongs to the short-chain dehydrogenases/reductases (SDR) family. SDR65C subfamily.

The polypeptide is Tropinone reductase homolog At2g30670 (Arabidopsis thaliana (Mouse-ear cress)).